The primary structure comprises 938 residues: Isoleucine--tRNA ligase (938 aa).

The 'HIGH' region motif lies at 58–68; it reads PYANGSIHIGH. Residue E561 coordinates L-isoleucyl-5'-AMP. The 'KMSKS' region motif lies at 602-606; it reads KMSKS. K605 is a binding site for ATP. Zn(2+) is bound by residues C901, C904, C921, and C924.

The protein belongs to the class-I aminoacyl-tRNA synthetase family. IleS type 1 subfamily. Monomer. It depends on Zn(2+) as a cofactor.

It is found in the cytoplasm. The enzyme catalyses tRNA(Ile) + L-isoleucine + ATP = L-isoleucyl-tRNA(Ile) + AMP + diphosphate. Its function is as follows. Catalyzes the attachment of isoleucine to tRNA(Ile). As IleRS can inadvertently accommodate and process structurally similar amino acids such as valine, to avoid such errors it has two additional distinct tRNA(Ile)-dependent editing activities. One activity is designated as 'pretransfer' editing and involves the hydrolysis of activated Val-AMP. The other activity is designated 'posttransfer' editing and involves deacylation of mischarged Val-tRNA(Ile). The polypeptide is Isoleucine--tRNA ligase (Sodalis glossinidius (strain morsitans)).